The primary structure comprises 300 residues: Diphthine methyl ester synthase (300 aa).

S-adenosyl-L-methionine-binding positions include Leu-9, Asp-85, Gly-88, 113 to 114 (SV), Leu-164, Leu-222, and His-247.

It belongs to the diphthine synthase family.

The protein resides in the cytoplasm. The catalysed reaction is 2-[(3S)-amino-3-carboxypropyl]-L-histidyl-[translation elongation factor 2] + 4 S-adenosyl-L-methionine = diphthine methyl ester-[translation elongation factor 2] + 4 S-adenosyl-L-homocysteine + 3 H(+). The protein operates within protein modification; peptidyl-diphthamide biosynthesis. Its function is as follows. S-adenosyl-L-methionine-dependent methyltransferase that catalyzes four methylations of the modified target histidine residue in translation elongation factor 2 (EF-2), to form an intermediate called diphthine methyl ester. The four successive methylation reactions represent the second step of diphthamide biosynthesis. This is Diphthine methyl ester synthase (DPH5) from Yarrowia lipolytica (strain CLIB 122 / E 150) (Yeast).